The sequence spans 182 residues: Large ribosomal subunit protein uL22 (182 aa).

The interval serine 155–glutamine 182 is disordered.

This sequence belongs to the universal ribosomal protein uL22 family.

The protein is Large ribosomal subunit protein uL22 (RpL17) of Carabus granulatus (Ground beetle).